A 93-amino-acid polypeptide reads, in one-letter code: Large ribosomal subunit protein uL23cz/uL23cy (93 aa).

It belongs to the universal ribosomal protein uL23 family. As to quaternary structure, part of the 50S ribosomal subunit.

It is found in the plastid. The protein localises to the chloroplast. In terms of biological role, binds to 23S rRNA. The protein is Large ribosomal subunit protein uL23cz/uL23cy (rpl23-A) of Populus alba (White poplar).